Consider the following 144-residue polypeptide: Superoxide dismutase [Mn], mitochondrial (144 aa).

Residues His-10, His-58, and Asp-143 each coordinate Mn(2+).

The protein belongs to the iron/manganese superoxide dismutase family. In terms of assembly, homotetramer. The cofactor is Mn(2+).

Its subcellular location is the mitochondrion matrix. It catalyses the reaction 2 superoxide + 2 H(+) = H2O2 + O2. Destroys superoxide anion radicals which are normally produced within the cells and which are toxic to biological systems. The chain is Superoxide dismutase [Mn], mitochondrial from Eptatretus stoutii (Pacific hagfish).